A 259-amino-acid polypeptide reads, in one-letter code: Global transcriptional regulator CodY (259 aa).

Residues 1 to 155 (MNLLEKTRKI…GATVVGMEIL (155 aa)) are GAF domain. The segment at residues 203–222 (ASKIADRVGITRSVIVNALR) is a DNA-binding region (H-T-H motif). Phosphoserine is present on Ser-215.

It belongs to the CodY family.

Its subcellular location is the cytoplasm. DNA-binding global transcriptional regulator which is involved in the adaptive response to starvation and acts by directly or indirectly controlling the expression of numerous genes in response to nutrient availability. During rapid exponential growth, CodY is highly active and represses genes whose products allow adaptation to nutrient depletion. In Geobacillus kaustophilus (strain HTA426), this protein is Global transcriptional regulator CodY.